We begin with the raw amino-acid sequence, 174 residues long: uncharacterized protein (174 aa).

The segment at 138 to 174 (VNLTSKSSGRSDEEGTTRRAPVLKTRADFVSRKDKHR) is disordered. Over residues 162-174 (TRADFVSRKDKHR) the composition is skewed to basic and acidic residues.

This is an uncharacterized protein from Bos taurus (Bovine).